The chain runs to 164 residues: Large ribosomal subunit protein bL9 (164 aa).

It belongs to the bacterial ribosomal protein bL9 family.

Functionally, binds to the 23S rRNA. The sequence is that of Large ribosomal subunit protein bL9 from Psychrobacter sp. (strain PRwf-1).